The sequence spans 706 residues: Protein psiG (706 aa).

The first 23 residues, 1 to 23 (MKIILTLLIILFSLNKNLNFVSS), serve as a signal peptide directing secretion. The Extracellular portion of the chain corresponds to 24 to 644 (EVTKSRICSI…FVCKPAAIIS (621 aa)). Residues asparagine 95, asparagine 107, asparagine 212, asparagine 296, asparagine 429, asparagine 521, asparagine 532, and asparagine 616 are each glycosylated (N-linked (GlcNAc...) asparagine). The 145-residue stretch at 109-253 (TLDKSSNIYS…SDYCGVCQGD (145 aa)) folds into the PA14 domain. Residues 645–665 (TSVIVGVSVAAAVVAIAIVVA) traverse the membrane as a helical segment. The Cytoplasmic segment spans residues 666–706 (SKKGYDAWAASNNNSLASLTSNPLYENPTGNGDNPMYQPNS). Residues 687–706 (NPLYENPTGNGDNPMYQPNS) form a disordered region. Residues 693-706 (PTGNGDNPMYQPNS) are compositionally biased toward polar residues.

Belongs to the prespore-cell-inducing factor family.

The protein localises to the membrane. In Dictyostelium discoideum (Social amoeba), this protein is Protein psiG (psiG-1).